A 165-amino-acid polypeptide reads, in one-letter code: Destrin (165 aa).

An N-acetylalanine modification is found at Ala2. Ser3 bears the Phosphoserine mark. Residues 4 to 153 (GVQVADEVCR…NRTCIAEKLG (150 aa)) enclose the ADF-H domain. Lys19 carries the post-translational modification N6-acetyllysine. The short motif at 30 to 34 (KKRKK) is the Nuclear localization signal element.

This sequence belongs to the actin-binding proteins ADF family. Post-translationally, ISGylated. In terms of tissue distribution, widely expressed. Not found in skeletal muscle.

In terms of biological role, actin-depolymerizing protein. Severs actin filaments (F-actin) and binds to actin monomers (G-actin). Acts in a pH-independent manner. The protein is Destrin (Dstn) of Mus musculus (Mouse).